The following is a 329-amino-acid chain: Ephrin-B1 (329 aa).

The N-terminal stretch at 1–20 is a signal peptide; the sequence is MEGLRRLLGLLLVLYRLCSA. The Extracellular portion of the chain corresponds to 21–226; it reads LGKNLEPVTW…FFNSKIAVFA (206 aa). The Ephrin RBD domain occupies 23 to 157; that stretch reads KNLEPVTWNS…TRSMKIIMKV (135 aa). 2 disulfides stabilise this stretch: Cys-57-Cys-94 and Cys-82-Cys-146. A glycan (N-linked (GlcNAc...) asparagine) is linked at Asn-132. The segment at 163-192 is disordered; it reads AVPPEQLTTTRPSKEADNTGKIATFGPWNG. Asn-203 is a glycosylation site (N-linked (GlcNAc...) asparagine). Residues 227–247 traverse the membrane as a helical segment; it reads AIGAGCVIFILIIIFLVVLLI. Topologically, residues 248 to 329 are cytoplasmic; that stretch reads KIRKRHRKHT…QSPANIYYKV (82 aa). Residues 327–329 carry the PDZ-binding motif; it reads YKV.

The protein belongs to the ephrin family. As to quaternary structure, interacts with TLE4 through the PDZ-binding motif. Post-translationally, inducible phosphorylation of tyrosine residues in the cytoplasmic domain. Tyrosine phosphorylation inhibits TLE4-binding. In terms of tissue distribution, expressed at low levels in most tissues with highest levels in the kidney, oocytes, ovary and testis.

The protein localises to the membrane. Functionally, cell surface transmembrane ligand for Eph receptors, a family of receptor tyrosine kinases which are crucial for migration, repulsion and adhesion during neuronal, vascular and epithelial development. Binds promiscuously Eph receptors residing on adjacent cells, leading to contact-dependent bidirectional signaling into neighboring cells. The signaling pathway downstream of the receptor is referred to as forward signaling while the signaling pathway downstream of the ephrin ligand is referred to as reverse signaling. May have a role in the developing mesenchymal and nervous tissue. The sequence is that of Ephrin-B1 (efnb1) from Xenopus laevis (African clawed frog).